Here is a 218-residue protein sequence, read N- to C-terminus: Large ribosomal subunit protein uL3 (218 aa).

Belongs to the universal ribosomal protein uL3 family. Part of the 50S ribosomal subunit. Forms a cluster with proteins L14 and L19.

Its function is as follows. One of the primary rRNA binding proteins, it binds directly near the 3'-end of the 23S rRNA, where it nucleates assembly of the 50S subunit. The sequence is that of Large ribosomal subunit protein uL3 from Corynebacterium glutamicum (strain R).